The sequence spans 220 residues: Redox-sensing transcriptional repressor Rex (220 aa).

Residues tryptophan 25–valine 64 constitute a DNA-binding region (H-T-H motif). Position 99 to 104 (glycine 99 to glycine 104) interacts with NAD(+).

This sequence belongs to the transcriptional regulatory Rex family. In terms of assembly, homodimer.

It is found in the cytoplasm. Modulates transcription in response to changes in cellular NADH/NAD(+) redox state. This Bacteroides thetaiotaomicron (strain ATCC 29148 / DSM 2079 / JCM 5827 / CCUG 10774 / NCTC 10582 / VPI-5482 / E50) protein is Redox-sensing transcriptional repressor Rex.